A 190-amino-acid polypeptide reads, in one-letter code: ATP synthase subunit delta (190 aa).

The protein belongs to the ATPase delta chain family. F-type ATPases have 2 components, F(1) - the catalytic core - and F(0) - the membrane proton channel. F(1) has five subunits: alpha(3), beta(3), gamma(1), delta(1), epsilon(1). F(0) has three main subunits: a(1), b(2) and c(10-14). The alpha and beta chains form an alternating ring which encloses part of the gamma chain. F(1) is attached to F(0) by a central stalk formed by the gamma and epsilon chains, while a peripheral stalk is formed by the delta and b chains.

It localises to the cell inner membrane. Functionally, f(1)F(0) ATP synthase produces ATP from ADP in the presence of a proton or sodium gradient. F-type ATPases consist of two structural domains, F(1) containing the extramembraneous catalytic core and F(0) containing the membrane proton channel, linked together by a central stalk and a peripheral stalk. During catalysis, ATP synthesis in the catalytic domain of F(1) is coupled via a rotary mechanism of the central stalk subunits to proton translocation. In terms of biological role, this protein is part of the stalk that links CF(0) to CF(1). It either transmits conformational changes from CF(0) to CF(1) or is implicated in proton conduction. This chain is ATP synthase subunit delta, found in Petrotoga mobilis (strain DSM 10674 / SJ95).